The chain runs to 304 residues: Putative dihydroorotate dehydrogenase A (fumarate) (304 aa).

FMN-binding positions include Ser22 and 46-47 (KG). Substrate contacts are provided by residues Lys46 and 70–74 (NSVGL). Asn100 and Asn128 together coordinate FMN. Asn128 is a substrate binding site. Cys131 acts as the Nucleophile in catalysis. FMN-binding residues include Lys166 and Val192. Substrate is bound at residue 193–194 (NT). FMN-binding positions include Gly218, 244–245 (GG), and 266–267 (GT).

This sequence belongs to the dihydroorotate dehydrogenase family. Type 1 subfamily. Homodimer. FMN serves as cofactor.

The protein localises to the cytoplasm. It carries out the reaction (S)-dihydroorotate + fumarate = orotate + succinate. It functions in the pathway pyrimidine metabolism; UMP biosynthesis via de novo pathway. Functionally, catalyzes the conversion of dihydroorotate to orotate with fumarate as the electron acceptor. This Solibacter usitatus (strain Ellin6076) protein is Putative dihydroorotate dehydrogenase A (fumarate) (pyrD).